The sequence spans 123 residues: Immunoglobulin lambda variable 5-37 (123 aa).

The first 19 residues, 1–19 (MAWTPLLLLLLSHCTGSLS), serve as a signal peptide directing secretion. The interval 20 to 44 (QPVLTQPPSSSASPGESARLTCTLP) is framework-1. Residues 21 to 123 (PVLTQPPSSS…YCMIWPSNAS (103 aa)) form the Ig-like domain. Cys41 and Cys115 are oxidised to a cystine. Residues 45-53 (SDINVGSYN) are complementarity-determining-1. Positions 54–70 (IYWYQQKPGSPPRYLLY) are framework-2. A complementarity-determining-2 region spans residues 71–77 (YYSDSDK). The segment at 78 to 115 (GQGSGVPSRFSGSKDASANTGILLISGLQSEDEADYYC) is framework-3. The tract at residues 116–123 (MIWPSNAS) is complementarity-determining-3.

In terms of assembly, immunoglobulins are composed of two identical heavy chains and two identical light chains; disulfide-linked.

The protein localises to the secreted. It localises to the cell membrane. In terms of biological role, v region of the variable domain of immunoglobulin light chains that participates in the antigen recognition. Immunoglobulins, also known as antibodies, are membrane-bound or secreted glycoproteins produced by B lymphocytes. In the recognition phase of humoral immunity, the membrane-bound immunoglobulins serve as receptors which, upon binding of a specific antigen, trigger the clonal expansion and differentiation of B lymphocytes into immunoglobulins-secreting plasma cells. Secreted immunoglobulins mediate the effector phase of humoral immunity, which results in the elimination of bound antigens. The antigen binding site is formed by the variable domain of one heavy chain, together with that of its associated light chain. Thus, each immunoglobulin has two antigen binding sites with remarkable affinity for a particular antigen. The variable domains are assembled by a process called V-(D)-J rearrangement and can then be subjected to somatic hypermutations which, after exposure to antigen and selection, allow affinity maturation for a particular antigen. In Homo sapiens (Human), this protein is Immunoglobulin lambda variable 5-37.